The following is a 295-amino-acid chain: SPX domain-containing protein 1 (295 aa).

Residues 1 to 166 enclose the SPX domain; that stretch reads MKFGKSLSSQ…GALIRLPFIQ (166 aa). The disordered stretch occupies residues 197–227; it reads NELPVSSEDGRGDSTNEDKPSNPSSSLVNGG. The segment covering 204-216 has biased composition (basic and acidic residues); it reads EDGRGDSTNEDKP.

In terms of assembly, interacts (via SPX domain) with PHR2 (via C-terminus). Interacts with RLI1 in the nucleus to prevents its positive regulation of leaf inclination during phosphate (Pi) starvation.

It localises to the nucleus. Its function is as follows. Involved in plant adaptation to phosphate (Pi) starvation. Inhibits PHR2 DNA-binding activity via a Pi-dependent protein interaction. Suppresses the regulation on expression of PT2 by PHR2 and accumulation of shoot Pi. Optimizes growth under phosphate-limited conditions through a negative feedback loop of the PSI (phosphate starvation-induced) signaling pathway. Regulates the expression of SPX2, SPX3 and SPX5. May be an important link between signal transduction pathways related to phosphate starvation and cold stress. Together with SPX2, plays a negative role in the regulation of leaf inclination by preventing RLI1 transcription factor activity in Pi depleted conditions. In Oryza sativa subsp. indica (Rice), this protein is SPX domain-containing protein 1.